We begin with the raw amino-acid sequence, 120 residues long: PYEKIGAELVKEVAKKTDDVAGDGTTTATVLAQALVKEGLRNVAAGANPLGLKRGIEKAVEKITEGLLATAKEVETKEQIAATAGISAGDQTIGDLIAEAMDKVGNEGVITVEESNTFGL.

23–27 contacts ATP; it reads DGTTT.

The protein belongs to the chaperonin (HSP60) family. In terms of assembly, forms a cylinder of 14 subunits composed of two heptameric rings stacked back-to-back. Interacts with the co-chaperonin GroES.

The protein resides in the cytoplasm. The enzyme catalyses ATP + H2O + a folded polypeptide = ADP + phosphate + an unfolded polypeptide.. Its function is as follows. Together with its co-chaperonin GroES, plays an essential role in assisting protein folding. The GroEL-GroES system forms a nano-cage that allows encapsulation of the non-native substrate proteins and provides a physical environment optimized to promote and accelerate protein folding. This Mycolicibacter nonchromogenicus (Mycobacterium nonchromogenicum) protein is Chaperonin GroEL.